Consider the following 274-residue polypeptide: Thiazole synthase (274 aa).

Lys-111 serves as the catalytic Schiff-base intermediate with DXP. 1-deoxy-D-xylulose 5-phosphate contacts are provided by residues Gly-172, 198 to 199 (AG), and 220 to 221 (NS). The segment at 251-274 (RLPERAAASPSSPTTGIIAEAKTK) is disordered.

The protein belongs to the ThiG family. Homotetramer. Forms heterodimers with either ThiH or ThiS.

The protein resides in the cytoplasm. It carries out the reaction [ThiS sulfur-carrier protein]-C-terminal-Gly-aminoethanethioate + 2-iminoacetate + 1-deoxy-D-xylulose 5-phosphate = [ThiS sulfur-carrier protein]-C-terminal Gly-Gly + 2-[(2R,5Z)-2-carboxy-4-methylthiazol-5(2H)-ylidene]ethyl phosphate + 2 H2O + H(+). It functions in the pathway cofactor biosynthesis; thiamine diphosphate biosynthesis. Its function is as follows. Catalyzes the rearrangement of 1-deoxy-D-xylulose 5-phosphate (DXP) to produce the thiazole phosphate moiety of thiamine. Sulfur is provided by the thiocarboxylate moiety of the carrier protein ThiS. In vitro, sulfur can be provided by H(2)S. The protein is Thiazole synthase of Prochlorococcus marinus (strain MIT 9313).